Consider the following 644-residue polypeptide: Core protein VP4 (644 aa).

The protein belongs to the orbivirus VP4 family.

It is found in the virion. In terms of biological role, the VP4 protein is one of the five proteins (with VP1, VP3, VP6 and VP7) which form the inner capsid of the virus. In Bluetongue virus 2 (isolate USA) (BTV 2), this protein is Core protein VP4 (Segment-4).